The chain runs to 252 residues: Probable endonuclease 4 (252 aa).

Positions 56, 96, 129, 162, 165, 191, 204, 206, and 233 each coordinate Zn(2+).

The protein belongs to the AP endonuclease 2 family. Zn(2+) serves as cofactor.

It carries out the reaction Endonucleolytic cleavage to 5'-phosphooligonucleotide end-products.. Functionally, endonuclease IV plays a role in DNA repair. It cleaves phosphodiester bonds at apurinic or apyrimidinic (AP) sites, generating a 3'-hydroxyl group and a 5'-terminal sugar phosphate. The chain is Probable endonuclease 4 from Mycobacterium leprae (strain Br4923).